We begin with the raw amino-acid sequence, 503 residues long: Probable cytosol aminopeptidase (503 aa).

Positions 270 and 275 each coordinate Mn(2+). Lys282 is an active-site residue. Positions 293, 352, and 354 each coordinate Mn(2+). The active site involves Arg356.

This sequence belongs to the peptidase M17 family. It depends on Mn(2+) as a cofactor.

It localises to the cytoplasm. It carries out the reaction Release of an N-terminal amino acid, Xaa-|-Yaa-, in which Xaa is preferably Leu, but may be other amino acids including Pro although not Arg or Lys, and Yaa may be Pro. Amino acid amides and methyl esters are also readily hydrolyzed, but rates on arylamides are exceedingly low.. The enzyme catalyses Release of an N-terminal amino acid, preferentially leucine, but not glutamic or aspartic acids.. Functionally, presumably involved in the processing and regular turnover of intracellular proteins. Catalyzes the removal of unsubstituted N-terminal amino acids from various peptides. This is Probable cytosol aminopeptidase from Klebsiella pneumoniae subsp. pneumoniae (strain ATCC 700721 / MGH 78578).